The chain runs to 392 residues: Metallophosphoesterase 1 (392 aa).

A helical membrane pass occupies residues 25 to 45 (KLAALVFAVVLFCEFLIYYLV). A divalent metal cation contacts are provided by D73, D115, N153, H246, H300, and H302. The helical transmembrane segment at 352–372 (DTVLATYCVAAGLLVVLILVH) threads the bilayer.

Belongs to the metallophosphoesterase superfamily. MPPE1 family. In terms of assembly, interacts with GPI-anchor proteins (via the GPI portion). Interacts with TMED10. Requires Mn(2+) as cofactor.

Its subcellular location is the endoplasmic reticulum-Golgi intermediate compartment membrane. In terms of biological role, metallophosphoesterase that catalyzes the removal of a side-chain ethanolamine-phosphate (EtNP) from the second mannose of the GPI-anchor protein intermediate. Participates in the glycan remodeling steps of GPI-anchor maturation to allow an efficient transport of GPI-anchor proteins from the endoplasmic reticulum to the Golgi. This is Metallophosphoesterase 1 from Ailuropoda melanoleuca (Giant panda).